The chain runs to 232 residues: Aquaporin Z (232 aa).

A run of 2 helical transmembrane segments spans residues 8 to 28 (AFGT…AAGF) and 33 to 53 (IGLL…AFAI). The NPA 1 signature appears at 62 to 64 (NPA). A run of 3 helical transmembrane segments spans residues 84–104 (IIAQ…IATG), 130–150 (MLAA…VIMG), and 159–179 (GFAP…SIPV). Residues 185–187 (NPA) carry the NPA 2 motif. A helical membrane pass occupies residues 201–221 (VSQLWLFWVAPIVGGVLGAVI).

It belongs to the MIP/aquaporin (TC 1.A.8) family. In terms of assembly, homotetramer.

It is found in the cell inner membrane. The enzyme catalyses H2O(in) = H2O(out). Its function is as follows. Channel that permits osmotically driven movement of water in both directions. It is involved in the osmoregulation and in the maintenance of cell turgor during volume expansion in rapidly growing cells. It mediates rapid entry or exit of water in response to abrupt changes in osmolarity. The chain is Aquaporin Z from Vibrio parahaemolyticus serotype O3:K6 (strain RIMD 2210633).